The primary structure comprises 224 residues: Urease accessory protein UreF (224 aa).

The protein belongs to the UreF family. In terms of assembly, ureD, UreF and UreG form a complex that acts as a GTP-hydrolysis-dependent molecular chaperone, activating the urease apoprotein by helping to assemble the nickel containing metallocenter of UreC. The UreE protein probably delivers the nickel.

The protein resides in the cytoplasm. Required for maturation of urease via the functional incorporation of the urease nickel metallocenter. In Pseudomonas putida (strain GB-1), this protein is Urease accessory protein UreF.